A 334-amino-acid chain; its full sequence is Protein-glutamate methylesterase FrzG (334 aa).

A CheB-type methylesterase domain is found at Pro-147–Cys-334. Active-site residues include Ser-156, His-183, and Asp-276.

It carries out the reaction [protein]-L-glutamate 5-O-methyl ester + H2O = L-glutamyl-[protein] + methanol + H(+). Probable methylesterase. Required for the normal aggregation of M.xanthus cells during fruiting body formation. It is also a component of a sensory transduction pathway that controls the frequency at which cells reverse their gliding direction. It may remove the methyl group from the gamma-glutamyl methyl ester residues in FrzCD. This chain is Protein-glutamate methylesterase FrzG (frzG), found in Myxococcus xanthus.